The following is a 224-amino-acid chain: UPF0758 protein Tbd_2588 (224 aa).

Positions 102–224 (ALSSPAAVRD…ALSFAEAGHL (123 aa)) constitute an MPN domain. The Zn(2+) site is built by H173, H175, and D186. Residues 173–186 (HNHPSGVNEPSQAD) carry the JAMM motif motif.

This sequence belongs to the UPF0758 family.

In Thiobacillus denitrificans (strain ATCC 25259 / T1), this protein is UPF0758 protein Tbd_2588.